The sequence spans 408 residues: Elongation factor Tu, chloroplastic (408 aa).

Residues 10–214 (KPHVNIGTIG…AVDSYIPTPK (205 aa)) enclose the tr-type G domain. Residues 19 to 26 (GHVDHGKT) are G1. 19-26 (GHVDHGKT) lines the GTP pocket. T26 serves as a coordination point for Mg(2+). Positions 60-64 (GITIN) are G2. Residues 81–84 (DCPG) are G3. GTP contacts are provided by residues 81–85 (DCPGH) and 136–139 (NKED). The G4 stretch occupies residues 136-139 (NKED). A G5 region spans residues 174-176 (SAL).

The protein belongs to the TRAFAC class translation factor GTPase superfamily. Classic translation factor GTPase family. EF-Tu/EF-1A subfamily.

It is found in the plastid. Its subcellular location is the chloroplast. It catalyses the reaction GTP + H2O = GDP + phosphate + H(+). GTP hydrolase that promotes the GTP-dependent binding of aminoacyl-tRNA to the A-site of ribosomes during protein biosynthesis. This chain is Elongation factor Tu, chloroplastic (tufA), found in Chara connivens (Convergent stonewort).